We begin with the raw amino-acid sequence, 239 residues long: Pimeloyl-[acyl-carrier protein] methyl ester esterase (239 aa).

Substrate-binding positions include tryptophan 20, 77-78, and 138-142; these read SM and FISLQ. Serine 77 acts as the Nucleophile in catalysis. Residues aspartate 192 and histidine 220 contribute to the active site. Residue histidine 220 participates in substrate binding.

The protein belongs to the AB hydrolase superfamily. Carboxylesterase BioH family. As to quaternary structure, monomer.

The protein resides in the cytoplasm. The catalysed reaction is 6-carboxyhexanoyl-[ACP] methyl ester + H2O = 6-carboxyhexanoyl-[ACP] + methanol + H(+). Its pathway is cofactor biosynthesis; biotin biosynthesis. Functionally, the physiological role of BioH is to remove the methyl group introduced by BioC when the pimeloyl moiety is complete. It allows to synthesize pimeloyl-ACP via the fatty acid synthetic pathway through the hydrolysis of the ester bonds of pimeloyl-ACP esters. This chain is Pimeloyl-[acyl-carrier protein] methyl ester esterase, found in Legionella pneumophila (strain Paris).